Consider the following 141-residue polypeptide: Large ribosomal subunit protein uL11 (141 aa).

The protein belongs to the universal ribosomal protein uL11 family. In terms of assembly, part of the ribosomal stalk of the 50S ribosomal subunit. Interacts with L10 and the large rRNA to form the base of the stalk. L10 forms an elongated spine to which L12 dimers bind in a sequential fashion forming a multimeric L10(L12)X complex. Post-translationally, one or more lysine residues are methylated.

In terms of biological role, forms part of the ribosomal stalk which helps the ribosome interact with GTP-bound translation factors. The protein is Large ribosomal subunit protein uL11 of Trichodesmium erythraeum (strain IMS101).